A 711-amino-acid chain; its full sequence is Ecdysone-inducible protein E75 (711 aa).

A DNA-binding region (nuclear receptor) is located at residues 44–120 (TVLCRVCGDK…VGMSRDAVRF (77 aa)). 2 NR C4-type zinc fingers span residues 47-67 (CRVCGDKASGFHYGVHSCEGC) and 84-108 (CTKNQQCSILRINRNRCQYCRLKKC). Positions 153 to 400 (DGPRLLARVV…QQMWVEDEGA (248 aa)) constitute an NR LBD domain. 4 disordered regions span residues 405–432 (SGADDSARSPIGSVSSSESSETTGDCGT), 466–530 (LTVT…DMPV), 559–602 (AMRR…PIRA), and 680–711 (DAPQPLNLSKKSPSPSPPPPPPRSYMPPMLPA). Basic and acidic residues-rich tracts occupy residues 511–521 (SLEEHSDDRRP) and 560–572 (MRRDTWSEAEARP). Over residues 574–590 (RPTPSPQPPHHPHPASP) the composition is skewed to pro residues. Composition is skewed to low complexity over residues 591-602 (AHPAHSPRPIRA) and 682-692 (PQPLNLSKKSP). Residues 693 to 711 (SPSPPPPPPRSYMPPMLPA) show a composition bias toward pro residues.

The protein belongs to the nuclear hormone receptor family. NR1 subfamily.

Its subcellular location is the nucleus. Orphan receptor possibly involved in the regulation of genes in the ecdysteroid cascade. This is Ecdysone-inducible protein E75 (E75) from Galleria mellonella (Greater wax moth).